The sequence spans 639 residues: Probable potassium transport system protein Kup 1 (639 aa).

Polar residues predominate over residues 1 to 16 (MALANTGSEAEPVEQS). The tract at residues 1 to 21 (MALANTGSEAEPVEQSSHPEI) is disordered. The next 12 membrane-spanning stretches (helical) occupy residues 29 to 49 (LMLG…IYAF), 67 to 87 (ILGV…IKYI), 117 to 137 (AVIL…AVIT), 154 to 174 (PTFQ…VFAV), 182 to 202 (VGLV…LSGL), 220 to 240 (IVAF…AIFL), 260 to 280 (IVLA…AGQG), 302 to 322 (ALIP…QAVI), 354 to 374 (IYMP…VVGF), 383 to 403 (AYGI…YVVM), 411 to 431 (LWVA…FFAS), and 436 to 456 (VFEG…GMWT).

This sequence belongs to the HAK/KUP transporter (TC 2.A.72) family.

The protein resides in the cell inner membrane. It catalyses the reaction K(+)(in) + H(+)(in) = K(+)(out) + H(+)(out). Transport of potassium into the cell. Likely operates as a K(+):H(+) symporter. The protein is Probable potassium transport system protein Kup 1 of Mesorhizobium japonicum (strain LMG 29417 / CECT 9101 / MAFF 303099) (Mesorhizobium loti (strain MAFF 303099)).